The following is a 157-amino-acid chain: S-ribosylhomocysteine lyase (157 aa).

The Fe cation site is built by His54, His58, and Cys126.

The protein belongs to the LuxS family. Homodimer. Fe cation serves as cofactor.

It carries out the reaction S-(5-deoxy-D-ribos-5-yl)-L-homocysteine = (S)-4,5-dihydroxypentane-2,3-dione + L-homocysteine. Its function is as follows. Involved in the synthesis of autoinducer 2 (AI-2) which is secreted by bacteria and is used to communicate both the cell density and the metabolic potential of the environment. The regulation of gene expression in response to changes in cell density is called quorum sensing. Catalyzes the transformation of S-ribosylhomocysteine (RHC) to homocysteine (HC) and 4,5-dihydroxy-2,3-pentadione (DPD). The sequence is that of S-ribosylhomocysteine lyase from Bacillus cereus (strain 03BB102).